Reading from the N-terminus, the 397-residue chain is Succinate--CoA ligase [ADP-forming] subunit beta (397 aa).

An ATP-grasp domain is found at K9–E254. ATP contacts are provided by residues K46, G53–G55, E109, S112, and E117. Mg(2+) is bound by residues N209 and D223. Substrate is bound by residues N274 and G331–M333.

It belongs to the succinate/malate CoA ligase beta subunit family. Heterotetramer of two alpha and two beta subunits. Requires Mg(2+) as cofactor.

The catalysed reaction is succinate + ATP + CoA = succinyl-CoA + ADP + phosphate. It carries out the reaction GTP + succinate + CoA = succinyl-CoA + GDP + phosphate. Its pathway is carbohydrate metabolism; tricarboxylic acid cycle; succinate from succinyl-CoA (ligase route): step 1/1. Succinyl-CoA synthetase functions in the citric acid cycle (TCA), coupling the hydrolysis of succinyl-CoA to the synthesis of either ATP or GTP and thus represents the only step of substrate-level phosphorylation in the TCA. The beta subunit provides nucleotide specificity of the enzyme and binds the substrate succinate, while the binding sites for coenzyme A and phosphate are found in the alpha subunit. This chain is Succinate--CoA ligase [ADP-forming] subunit beta, found in Nitrobacter hamburgensis (strain DSM 10229 / NCIMB 13809 / X14).